Here is a 364-residue protein sequence, read N- to C-terminus: DNA replication and repair protein RecF (364 aa).

Position 30–37 (30–37 (GRNAQGKT)) interacts with ATP.

This sequence belongs to the RecF family.

The protein localises to the cytoplasm. Its function is as follows. The RecF protein is involved in DNA metabolism; it is required for DNA replication and normal SOS inducibility. RecF binds preferentially to single-stranded, linear DNA. It also seems to bind ATP. In Pelotomaculum thermopropionicum (strain DSM 13744 / JCM 10971 / SI), this protein is DNA replication and repair protein RecF.